The following is a 372-amino-acid chain: Beta-1,3-N-acetylglucosaminyltransferase radical fringe (372 aa).

Residues 1–10 (MNSSCLGLRR) are Cytoplasmic-facing. A helical; Signal-anchor for type II membrane protein transmembrane segment spans residues 11-27 (TCFLLSVTAAAVLLLLL). At 28-372 (PRGQPPAAPR…TIWCPNKKMS (345 aa)) the chain is on the lumenal side. The segment covering 30–48 (GQPPAAPRRRPPPAGPSRP) has biased composition (pro residues). Residues 30 to 96 (GQPPAAPRRR…RVRMGPPGGS (67 aa)) form a disordered region. The segment covering 64–78 (DRGGGSGAAGGGRGV) has biased composition (gly residues). Arg-120 contributes to the substrate binding site. A glycan (N-linked (GlcNAc...) asparagine) is linked at Asn-159. 2 disulfides stabilise this stretch: Cys-160–Cys-171 and Cys-189–Cys-253. Residue Asp-193 participates in substrate binding. A Mn(2+)-binding site is contributed by Asp-194. Residue Asp-283 is part of the active site. His-307 provides a ligand contact to Mn(2+). A disulfide bond links Cys-357 and Cys-366.

This sequence belongs to the glycosyltransferase 31 family. Requires Mn(2+) as cofactor.

The protein localises to the golgi apparatus membrane. It carries out the reaction 3-O-(alpha-L-fucosyl)-L-threonyl-[EGF-like domain protein] + UDP-N-acetyl-alpha-D-glucosamine = 3-O-(N-acetyl-beta-D-glucosaminyl-(1-&gt;3)-alpha-L-fucosyl)-L-threonyl-[EGF-like domain protein] + UDP + H(+). The enzyme catalyses 3-O-(alpha-L-fucosyl)-L-seryl-[EGF-like domain protein] + UDP-N-acetyl-alpha-D-glucosamine = 3-O-(N-acetyl-beta-D-glucosaminyl-(1-&gt;3)-alpha-L-fucosyl)-L-seryl-[EGF-like domain protein] + UDP + H(+). Functionally, glycosyltransferase that initiates the elongation of O-linked fucose residues attached to EGF-like repeats in the extracellular domain of Notch molecules. Plays an important role in limb outgrowth, it directs the formation and positioning of the apical ectodermal ridge (AER), one of the key organizer centers of vertebrate limb development. This is Beta-1,3-N-acetylglucosaminyltransferase radical fringe (RFNG) from Gallus gallus (Chicken).